The following is a 393-amino-acid chain: Arginine biosynthesis bifunctional protein ArgJ 3 (393 aa).

The substrate site is built by Thr148, Lys170, Thr181, Glu260, Asn388, and Thr393. The active-site Nucleophile is Thr181.

The protein belongs to the ArgJ family. As to quaternary structure, heterotetramer of two alpha and two beta chains.

The protein resides in the cytoplasm. It carries out the reaction N(2)-acetyl-L-ornithine + L-glutamate = N-acetyl-L-glutamate + L-ornithine. It catalyses the reaction L-glutamate + acetyl-CoA = N-acetyl-L-glutamate + CoA + H(+). It functions in the pathway amino-acid biosynthesis; L-arginine biosynthesis; L-ornithine and N-acetyl-L-glutamate from L-glutamate and N(2)-acetyl-L-ornithine (cyclic): step 1/1. Its pathway is amino-acid biosynthesis; L-arginine biosynthesis; N(2)-acetyl-L-ornithine from L-glutamate: step 1/4. Its function is as follows. Catalyzes two activities which are involved in the cyclic version of arginine biosynthesis: the synthesis of N-acetylglutamate from glutamate and acetyl-CoA as the acetyl donor, and of ornithine by transacetylation between N(2)-acetylornithine and glutamate. This Streptomyces clavuligerus protein is Arginine biosynthesis bifunctional protein ArgJ 3.